A 207-amino-acid polypeptide reads, in one-letter code: MATTLEVQKRETTQHSEVTRLRSEGKVPGIIYGYKSENVPVSVDSLELIKAVRDNGRNAVFSVTVDGKKLNVLLHEYQVDPLKDVLVHVDLLAVDMNEEVETDVRVVLVGDAPGVKAGGVLQQIIHDVKVSATPEKLPETIELDISSLEIGDVLTTNDLPENKDYVVQAEEEETVVTVSAPRAEEEPTTTEAPEPEAVHGKDEEPVE.

Residues 171–207 (EEETVVTVSAPRAEEEPTTTEAPEPEAVHGKDEEPVE) are disordered. Positions 196–207 (EAVHGKDEEPVE) are enriched in basic and acidic residues.

The protein belongs to the bacterial ribosomal protein bL25 family. CTC subfamily. As to quaternary structure, part of the 50S ribosomal subunit; part of the 5S rRNA/L5/L18/L25 subcomplex. Contacts the 5S rRNA. Binds to the 5S rRNA independently of L5 and L18.

Functionally, this is one of the proteins that binds to the 5S RNA in the ribosome where it forms part of the central protuberance. The chain is Large ribosomal subunit protein bL25 from Listeria monocytogenes serotype 4b (strain F2365).